We begin with the raw amino-acid sequence, 386 residues long: Patatin group M-2 (386 aa).

The first 23 residues, 1 to 23, serve as a signal peptide directing secretion; that stretch reads MATTKSFLILFFMILATTSSTCA. The 198-residue stretch at 32-229 folds into the PNPLA domain; that stretch reads LSIDGGGIKG…TVGDPALLSL (198 aa). The GXGXXG signature appears at 36-41; sequence GGGIKG. The GXSXG signature appears at 75-79; sequence GTSTG. The Nucleophile role is filled by Ser77. N-linked (GlcNAc...) asparagine glycosylation occurs at Asn115. Asp215 functions as the Proton acceptor in the catalytic mechanism. The short motif at 215-217 is the DGA/G element; it reads DGG. Residues 321–384 are a coiled coil; the sequence is ENALTGTTTE…DRKKLRANKA (64 aa).

The protein belongs to the patatin family. In terms of tissue distribution, tuber.

The protein resides in the vacuole. In terms of biological role, probable lipolytic acyl hydrolase (LAH), an activity which is thought to be involved in the response of tubers to pathogens. In Solanum tuberosum (Potato), this protein is Patatin group M-2.